Here is a 1196-residue protein sequence, read N- to C-terminus: Nucleolar protein 6 (1196 aa).

Disordered regions lie at residues 1–75 (MPGK…VKPP) and 1140–1196 (KREQ…KALK). Residues 22-31 (HAEDHSDLEH) show a composition bias toward basic and acidic residues. Basic residues predominate over residues 1165–1174 (KPKKHRKRKG).

The protein belongs to the NRAP family. In terms of assembly, part of the small subunit (SSU) processome, composed of more than 70 proteins and the RNA chaperone small nucleolar RNA (snoRNA) U3.

The protein localises to the nucleus. It is found in the nucleolus. The protein resides in the chromosome. In terms of biological role, part of the small subunit (SSU) processome, first precursor of the small eukaryotic ribosomal subunit. During the assembly of the SSU processome in the nucleolus, many ribosome biogenesis factors, an RNA chaperone and ribosomal proteins associate with the nascent pre-rRNA and work in concert to generate RNA folding, modifications, rearrangements and cleavage as well as targeted degradation of pre-ribosomal RNA by the RNA exosome. The polypeptide is Nucleolar protein 6 (Drosophila sechellia (Fruit fly)).